A 306-amino-acid chain; its full sequence is Arylesterase (306 aa).

An Involved in the stabilization of the negatively charged intermediate by the formation of the oxyanion hole motif is present at residues 82-84; the sequence is HGG. Catalysis depends on residues serine 156, aspartate 251, and histidine 281.

Monomer.

It carries out the reaction a phenyl acetate + H2O = a phenol + acetate + H(+). The enzyme catalyses An aryl dialkyl phosphate + H2O = dialkyl phosphate + an aryl alcohol.. Its activity is regulated as follows. Completely inhibited by chemical modifiers that are specific to Cys (HgCl(2) and p-chloromercuribenzoic acid), His (diethyl pyrocarbonate) and Ser (diisopropyl fluorophosphate and phenylmethanesulfonyl fluoride). No significant effect with chemical modifiers specific to Lys (pyridoxal 5'-phosphate) and Arg (phenylglyoxal). Not inhibited by inhibitors of A-esterases (paraoxon) or C-esterases (physostigmine/eserine). Activity is also not effected by incubation with 5 mM divalent cations for 30 minutes at 30 degrees Celsius or with 10 mM EDTA for 60 minutes at 75 degrees Celsius. In terms of biological role, has a broad substrate specificity. Hydrolyzes various p-nitrophenyl phosphates, aromatic esters and p-nitrophenyl fatty acids in vitro. Most active against paraoxon, phenyl acetate and p-nitrophenyl caproate (C6), respectively. Also has tributyrinase activity, but shows no hydrolytic activity toward other triacylglycerols including tricaprylin, trimyristin, tripalmitin or triolein in vitro. In Saccharolobus solfataricus (Sulfolobus solfataricus), this protein is Arylesterase.